Here is a 368-residue protein sequence, read N- to C-terminus: Biglycan (368 aa).

A signal peptide spans 1-16 (MKVLLLLCSCILVIHA). The propeptide occupies 17 to 37 (LPFEQRGFWDFSMDDGMAMMK). 2 disulfide bridges follow: Cys-63–Cys-69 and Cys-67–Cys-76. 12 LRR repeats span residues 82 to 102 (TSIP…NNKI), 103 to 126 (TEIK…NNKI), 127 to 150 (SKIN…KNNL), 151 to 171 (EEIP…ENKI), 172 to 195 (KKVP…GNPL), 196 to 220 (ENGG…EAKL), 221 to 241 (SGIP…NNKI), 242 to 265 (QAIE…HNNI), 266 to 289 (RMIE…NNKL), 290 to 312 (SKVP…SNNI), 313 to 342 (TQVG…NNPV), and 343 to 368 (PYWE…NYRK). N-linked (GlcNAc...) asparagine glycosylation is found at Asn-270 and Asn-311. A disulfide bridge connects residues Cys-321 and Cys-354.

Belongs to the small leucine-rich proteoglycan (SLRP) family. SLRP class I subfamily.

Its subcellular location is the secreted. It localises to the extracellular space. The protein localises to the extracellular matrix. Functionally, may be involved in collagen fiber assembly. This Xenopus laevis (African clawed frog) protein is Biglycan (bgn).